Consider the following 358-residue polypeptide: Transcriptional repressor protein KorB (358 aa).

The segment covering 1–42 (MTAAQAKTTKKNTAAAAQEAAGAAQPSGLGLDSIGDLSSLLD) has biased composition (low complexity). Disordered regions lie at residues 1 to 79 (MTAA…FSPE) and 256 to 305 (DPNT…DKLK). Positions 275-285 (AGDGQDGEDGD) are enriched in acidic residues. Basic and acidic residues predominate over residues 286 to 305 (QDGKDAKEKGAKEPDPDKLK).

Belongs to the ParB family.

In terms of biological role, in conjunction with KorA, inhibits the transcription of the kilA, trfA and korAB operons. Is also involved in the negative control of the kilB operon. In Escherichia coli, this protein is Transcriptional repressor protein KorB (korB).